The chain runs to 93 residues: MLCSIYKSSKKEGTYLYIPKKDDFSQVPDTLMQMFGKPSHVMTVNLEGRSLALVNIEKVKESLSNEGFFLQLPPPPENLLQQHKERKAQQKND.

Positions Met-1–Lys-84 constitute a YcgL domain. The tract at residues Pro-74 to Asp-93 is disordered.

This is YcgL domain-containing protein VV1058 from Vibrio vulnificus (strain YJ016).